A 352-amino-acid chain; its full sequence is tRNA-specific 2-thiouridylase MnmA (352 aa).

ATP-binding positions include 6–13 and Leu-32; that span reads AMSGGVDS. Cys-101 acts as the Nucleophile in catalysis. Cys-101 and Cys-194 are oxidised to a cystine. Gly-125 provides a ligand contact to ATP. An interaction with tRNA region spans residues 144-146; that stretch reads KDQ. The active-site Cysteine persulfide intermediate is the Cys-194.

This sequence belongs to the MnmA/TRMU family.

It localises to the cytoplasm. It carries out the reaction S-sulfanyl-L-cysteinyl-[protein] + uridine(34) in tRNA + AH2 + ATP = 2-thiouridine(34) in tRNA + L-cysteinyl-[protein] + A + AMP + diphosphate + H(+). Its function is as follows. Catalyzes the 2-thiolation of uridine at the wobble position (U34) of tRNA, leading to the formation of s(2)U34. The polypeptide is tRNA-specific 2-thiouridylase MnmA (Frankia alni (strain DSM 45986 / CECT 9034 / ACN14a)).